A 439-amino-acid polypeptide reads, in one-letter code: Proton pump-interactor 4 (439 aa).

Residues 286 to 354 (KEEKEIDEET…AKKKKAVCKS (69 aa)) are a coiled coil. A helical transmembrane segment spans residues 415 to 435 (LWVWTVSSAAVALPLALLVVF).

The protein belongs to the plant Proton pump-interactor protein family.

The protein localises to the cell membrane. The protein resides in the endoplasmic reticulum membrane. Functionally, may regulate plasma membrane ATPase activity. This is Proton pump-interactor 4 (PPI4) from Arabidopsis thaliana (Mouse-ear cress).